Here is a 353-residue protein sequence, read N- to C-terminus: GTPase Obg (353 aa).

An Obg domain is found at 1 to 159 (MKFVDEVRIH…RDLVLELKLL (159 aa)). One can recognise an OBG-type G domain in the interval 160–333 (ADVGIVGYPN…LMDAVGRALY (174 aa)). GTP contacts are provided by residues 166–173 (GYPNAGKS), 191–195 (FTTLV), 212–215 (DIPG), 283–286 (TKID), and 314–316 (SAV). The Mg(2+) site is built by serine 173 and threonine 193.

It belongs to the TRAFAC class OBG-HflX-like GTPase superfamily. OBG GTPase family. In terms of assembly, monomer. The cofactor is Mg(2+).

The protein localises to the cytoplasm. In terms of biological role, an essential GTPase which binds GTP, GDP and possibly (p)ppGpp with moderate affinity, with high nucleotide exchange rates and a fairly low GTP hydrolysis rate. Plays a role in control of the cell cycle, stress response, ribosome biogenesis and in those bacteria that undergo differentiation, in morphogenesis control. In Anaeromyxobacter sp. (strain Fw109-5), this protein is GTPase Obg.